The primary structure comprises 209 residues: Bilin biosynthesis protein RpcF (209 aa).

The protein belongs to the CpcE/RpcE/PecE family.

An enzyme involved in the biosynthesis of bilin. Might be involved in the specific attachment of phycoerythrobilin (PEB) to the R-phycocyanin II alpha chain. This chain is Bilin biosynthesis protein RpcF (rpcF), found in Synechococcus sp. (strain WH8020).